The sequence spans 319 residues: MGYSRILGTGSFLPSQVLTNAQLAERVETSDEWIVSRTGIRARHIADEGHKTSDLALRAAQAAIASAGIDKGEIDLIIVATTTPDMVFPSTACILQEKLGLPGVQAFDVQAVCAGFVYALTTANAYIKSGLAKKALVVGAEIMSRVLDWDDRRTCVLFGDGAGAVVLGESDEPGILHAKLAADGRYQGLLNTPAQISGGKIQGIPYLHMDGPAVFKFAVKSLSEIATATLAEAGVEQASLDWLVPHQANLRIIESTAKHLGLPMDKVVVTLPEQGNTSAASIPLALDVAVRDGRIRRGQTVMLEGIGGGFAWGAVLLTF.

Catalysis depends on residues cysteine 113 and histidine 246. The segment at 247-251 (QANLR) is ACP-binding. Asparagine 276 is a catalytic residue.

It belongs to the thiolase-like superfamily. FabH family. As to quaternary structure, homodimer.

The protein resides in the cytoplasm. It carries out the reaction malonyl-[ACP] + acetyl-CoA + H(+) = 3-oxobutanoyl-[ACP] + CO2 + CoA. It participates in lipid metabolism; fatty acid biosynthesis. Catalyzes the condensation reaction of fatty acid synthesis by the addition to an acyl acceptor of two carbons from malonyl-ACP. Catalyzes the first condensation reaction which initiates fatty acid synthesis and may therefore play a role in governing the total rate of fatty acid production. Possesses both acetoacetyl-ACP synthase and acetyl transacylase activities. Its substrate specificity determines the biosynthesis of branched-chain and/or straight-chain of fatty acids. The chain is Beta-ketoacyl-[acyl-carrier-protein] synthase III from Chromobacterium violaceum (strain ATCC 12472 / DSM 30191 / JCM 1249 / CCUG 213 / NBRC 12614 / NCIMB 9131 / NCTC 9757 / MK).